Consider the following 439-residue polypeptide: Adenylosuccinate synthetase (439 aa).

Residues 14-20 (GDEGKGK) and 42-44 (GHT) each bind GTP. Asp-15 serves as the catalytic Proton acceptor. 2 residues coordinate Mg(2+): Asp-15 and Gly-42. Residues 15-18 (DEGK), 40-43 (NAGH), Thr-130, Arg-144, Gln-225, Thr-240, and Arg-304 contribute to the IMP site. The active-site Proton donor is the His-43. Residue 300 to 306 (TTTGRRR) participates in substrate binding. GTP contacts are provided by residues Arg-306, 332–334 (KLD), and 414–416 (SLG).

Belongs to the adenylosuccinate synthetase family. As to quaternary structure, homodimer. Requires Mg(2+) as cofactor.

It localises to the cytoplasm. It catalyses the reaction IMP + L-aspartate + GTP = N(6)-(1,2-dicarboxyethyl)-AMP + GDP + phosphate + 2 H(+). Its pathway is purine metabolism; AMP biosynthesis via de novo pathway; AMP from IMP: step 1/2. Its function is as follows. Plays an important role in the de novo pathway of purine nucleotide biosynthesis. Catalyzes the first committed step in the biosynthesis of AMP from IMP. This chain is Adenylosuccinate synthetase, found in Prochlorococcus marinus (strain MIT 9303).